The following is a 200-amino-acid chain: Large ribosomal subunit protein uL4 (200 aa).

The tract at residues 43-65 (RAQKTRSEVSGGGAKPWRQKGTG) is disordered.

This sequence belongs to the universal ribosomal protein uL4 family. As to quaternary structure, part of the 50S ribosomal subunit.

In terms of biological role, one of the primary rRNA binding proteins, this protein initially binds near the 5'-end of the 23S rRNA. It is important during the early stages of 50S assembly. It makes multiple contacts with different domains of the 23S rRNA in the assembled 50S subunit and ribosome. Forms part of the polypeptide exit tunnel. In Aliivibrio salmonicida (strain LFI1238) (Vibrio salmonicida (strain LFI1238)), this protein is Large ribosomal subunit protein uL4.